The primary structure comprises 393 residues: Succinate--CoA ligase [ADP-forming] subunit beta (393 aa).

The ATP-grasp domain maps to 9-251 (KALFEKFGVL…LNEEDPKEIE (243 aa)). Residues Lys-46, 53–55 (GRG), Ser-109, and Glu-114 contribute to the ATP site. Mg(2+) is bound by residues Asn-206 and Asp-220. Substrate is bound by residues Asn-271 and 328-330 (GIM).

The protein belongs to the succinate/malate CoA ligase beta subunit family. In terms of assembly, heterotetramer of two alpha and two beta subunits. Mg(2+) serves as cofactor.

The enzyme catalyses succinate + ATP + CoA = succinyl-CoA + ADP + phosphate. It catalyses the reaction GTP + succinate + CoA = succinyl-CoA + GDP + phosphate. It participates in carbohydrate metabolism; tricarboxylic acid cycle; succinate from succinyl-CoA (ligase route): step 1/1. Functionally, succinyl-CoA synthetase functions in the citric acid cycle (TCA), coupling the hydrolysis of succinyl-CoA to the synthesis of either ATP or GTP and thus represents the only step of substrate-level phosphorylation in the TCA. The beta subunit provides nucleotide specificity of the enzyme and binds the substrate succinate, while the binding sites for coenzyme A and phosphate are found in the alpha subunit. This is Succinate--CoA ligase [ADP-forming] subunit beta from Opitutus terrae (strain DSM 11246 / JCM 15787 / PB90-1).